The following is a 496-amino-acid chain: Galactose-1-phosphate uridylyltransferase (496 aa).

This sequence belongs to the galactose-1-phosphate uridylyltransferase type 2 family.

Its subcellular location is the cytoplasm. It catalyses the reaction alpha-D-galactose 1-phosphate + UDP-alpha-D-glucose = alpha-D-glucose 1-phosphate + UDP-alpha-D-galactose. Its pathway is carbohydrate metabolism; galactose metabolism. This chain is Galactose-1-phosphate uridylyltransferase, found in Staphylococcus saprophyticus subsp. saprophyticus (strain ATCC 15305 / DSM 20229 / NCIMB 8711 / NCTC 7292 / S-41).